The primary structure comprises 429 residues: Phosphoribosylamine--glycine ligase (429 aa).

The ATP-grasp domain occupies 109–316 (KDFLARHNIP…LVELCLAACE (208 aa)). 135–196 (LREKGAPIVI…EEFLDGEEAS (62 aa)) contributes to the ATP binding site. Residues 212-237 (SQDHKRVGDKDTGPNTGGMGAYSPAP) are disordered. Basic and acidic residues predominate over residues 213 to 223 (QDHKRVGDKDT). Positions 286 and 288 each coordinate Mg(2+).

The protein belongs to the GARS family. Monomer. Mg(2+) is required as a cofactor. The cofactor is Mn(2+).

It carries out the reaction 5-phospho-beta-D-ribosylamine + glycine + ATP = N(1)-(5-phospho-beta-D-ribosyl)glycinamide + ADP + phosphate + H(+). The protein operates within purine metabolism; IMP biosynthesis via de novo pathway; N(1)-(5-phospho-D-ribosyl)glycinamide from 5-phospho-alpha-D-ribose 1-diphosphate: step 2/2. This chain is Phosphoribosylamine--glycine ligase, found in Escherichia coli O157:H7.